The chain runs to 356 residues: MRRELLLERIDKLKATMPWYILEYYQSKLAVPYSFTTLYEYLKEYDRFFNWVLESGITDASHIAEIPLSVLENMSKKDMEAFILYLRERPLLNANTTQNGVSQTTINRTLSALSSLYKYLTEEVENEQGEPYFYRNVMKKVATKKKKETLAARAENIKQKLFLGDETEEFLQYIDTEYPKKLSNRALSSFNKNKERDLAIIALLLASGVRLSEAVNLDLKDINLKMMVIEVTRKGGKRDSVNVAAFAKPYLEEYLSIRIKRYKAEKTDTAFFLTEYRGIPNRIDASSVEKMVAKYSEDFKVRVTPHKLRHTLATRLYDATKSQVLVSHQLGHASTQVTDLYTHIVNDEQKNALDKL.

In terms of domain architecture, Core-binding (CB) spans 16–121 (TMPWYILEYY…ALSSLYKYLT (106 aa)). Positions 169–354 (EFLQYIDTEY…VNDEQKNALD (186 aa)) constitute a Tyr recombinase domain. Active-site residues include Arg210, Lys234, His306, Arg309, and His332. Catalysis depends on Tyr341, which acts as the O-(3'-phospho-DNA)-tyrosine intermediate.

Belongs to the 'phage' integrase family. XerS subfamily.

It is found in the cytoplasm. Its activity is regulated as follows. FtsK is required for recombination. Site-specific tyrosine recombinase, which acts by catalyzing the cutting and rejoining of the recombining DNA molecules. Essential to convert dimers of the bacterial chromosome into monomers to permit their segregation at cell division. In Streptococcus sanguinis (strain SK36), this protein is Tyrosine recombinase XerS.